The chain runs to 464 residues: Chromosomal replication initiator protein DnaA (464 aa).

Positions 1-82 (MKNAAELWHN…GSRLDIQFIE (82 aa)) are domain I, interacts with DnaA modulators. The domain II stretch occupies residues 82 to 125 (EEGQAKHMLDRQNEEVEVMEVAPAKTKAQKTPKSSDELVMSELG). Positions 126 to 342 (QLNEKYTFDT…GALTRVIAYA (217 aa)) are domain III, AAA+ region. Gly-170, Gly-172, Lys-173, and Thr-174 together coordinate ATP. A domain IV, binds dsDNA region spans residues 343–464 (NLVGRTIDPN…EQIKHELKHS (122 aa)).

Belongs to the DnaA family. As to quaternary structure, oligomerizes as a right-handed, spiral filament on DNA at oriC.

The protein localises to the cytoplasm. In terms of biological role, plays an essential role in the initiation and regulation of chromosomal replication. ATP-DnaA binds to the origin of replication (oriC) to initiate formation of the DNA replication initiation complex once per cell cycle. Binds the DnaA box (a 9 base pair repeat at the origin) and separates the double-stranded (ds)DNA. Forms a right-handed helical filament on oriC DNA; dsDNA binds to the exterior of the filament while single-stranded (ss)DNA is stabiized in the filament's interior. The ATP-DnaA-oriC complex binds and stabilizes one strand of the AT-rich DNA unwinding element (DUE), permitting loading of DNA polymerase. After initiation quickly degrades to an ADP-DnaA complex that is not apt for DNA replication. Binds acidic phospholipids. The polypeptide is Chromosomal replication initiator protein DnaA (Exiguobacterium sibiricum (strain DSM 17290 / CCUG 55495 / CIP 109462 / JCM 13490 / 255-15)).